A 24-amino-acid polypeptide reads, in one-letter code: Homotarsinin (24 aa).

R24 carries the arginine amide modification.

As to quaternary structure, homodimer; disulfide-linked. Expressed by the skin glands.

The protein resides in the secreted. Antimicrobial peptide. Active against Gram-negative bacteria E.coli ATCC 25922 (MIC=1.5 uM) and P.aeruginosa ATTC 27853 (MIC=23.2 uM) and against Gram-positive bacterium S.aureus ATCC 29313 (MIC=11.6 uM). Has no hemolytic activity. Associates with and disrupts membranes in vitro. In Phyllomedusa tarsius (Brownbelly leaf frog), this protein is Homotarsinin.